The following is a 151-amino-acid chain: uncharacterized protein (151 aa).

This is an uncharacterized protein from Methanocaldococcus jannaschii (strain ATCC 43067 / DSM 2661 / JAL-1 / JCM 10045 / NBRC 100440) (Methanococcus jannaschii).